A 180-amino-acid polypeptide reads, in one-letter code: Shikimate kinase (180 aa).

G14–S19 contributes to the ATP binding site. Residue S18 participates in Mg(2+) binding. 3 residues coordinate substrate: D36, R60, and G82. Residue R120 coordinates ATP. Residue R139 coordinates substrate.

The protein belongs to the shikimate kinase family. In terms of assembly, monomer. The cofactor is Mg(2+).

The protein localises to the cytoplasm. It catalyses the reaction shikimate + ATP = 3-phosphoshikimate + ADP + H(+). It participates in metabolic intermediate biosynthesis; chorismate biosynthesis; chorismate from D-erythrose 4-phosphate and phosphoenolpyruvate: step 5/7. In terms of biological role, catalyzes the specific phosphorylation of the 3-hydroxyl group of shikimic acid using ATP as a cosubstrate. This is Shikimate kinase from Xylella fastidiosa (strain M12).